The following is a 151-amino-acid chain: Kinetoplast-associated protein 1 (151 aa).

A propeptide spanning residues 1 to 9 (MLRVSVRSL) is cleaved from the precursor. Residues 13-151 (ASSKAGSKAA…KKGAAKKAHK (139 aa)) are disordered. Composition is skewed to low complexity over residues 15–49 (SKAG…VPPV), 70–91 (AAAA…TPAK), and 101–111 (SKPSAPKQAAG). Residues 112 to 151 (KMRKAAGKAQRKIKAAARKAAPKKMAKSFGKKGAAKKAHK) show a composition bias toward basic residues.

This sequence belongs to the KAP family. As to quaternary structure, associates with the kinetoplast DNA network.

The protein resides in the mitochondrion matrix. Its subcellular location is the kinetoplast. Its function is as follows. Histone H1-like DNA-binding protein involved in the organization and segregation of kinetoplast DNA (kDNA). The mitochondrial DNA of kinetoplastid protozoa consists of about 5,000 minicircles and 20 to 30 maxicircles. These circular DNAs are held together by catenation into a highly organized compact disk structure referred to as a kinetoplast DNA (kDNA) network. Binds preferentially to a specific fragment of minicircle DNA and is able to compact kDNA networks through DNA charge neutralization and condensation. This chain is Kinetoplast-associated protein 1 (KAP4), found in Crithidia fasciculata.